The following is a 417-amino-acid chain: NADP-specific glutamate dehydrogenase A1 (417 aa).

Residue Lys-105 is part of the active site.

Belongs to the Glu/Leu/Phe/Val dehydrogenases family. In terms of assembly, homohexamer.

The catalysed reaction is L-glutamate + NADP(+) + H2O = 2-oxoglutarate + NH4(+) + NADPH + H(+). This is NADP-specific glutamate dehydrogenase A1 (gdhA1) from Halobacterium salinarum (Halobacterium halobium).